We begin with the raw amino-acid sequence, 96 residues long: Small ribosomal subunit protein bS6 (96 aa).

It belongs to the bacterial ribosomal protein bS6 family.

Binds together with bS18 to 16S ribosomal RNA. This chain is Small ribosomal subunit protein bS6, found in Streptococcus equi subsp. equi (strain 4047).